The primary structure comprises 144 residues: Maximins 2/H8 type 2 (144 aa).

The first 18 residues, 1–18, serve as a signal peptide directing secretion; the sequence is MNFKYIVAVSFLIASAYA. Residues 19 to 43 constitute a propeptide that is removed on maturation; the sequence is RSEENEIQSLSQRDVLEEESLREIR. N70 is subject to Asparagine amide. A propeptide spanning residues 74–123 is cleaved from the precursor; that stretch reads TAEEHEVMKRLETVMRDLDSLDYPEEASERETRGFNQEEIANLFTKKEKR. Residue I143 is modified to Isoleucine amide.

This sequence belongs to the bombinin family. Expressed by the skin glands.

It localises to the secreted. Functionally, maximin-2 shows antibacterial activity against both Gram-positive and Gram-negative bacteria. It also shows antimicrobial activity against the fungus C.albicans, but not against A.flavus nor P.uticale. It has little hemolytic activity. Its function is as follows. Maximin-H8 shows antimicrobial activity against bacteria and against the fungus C.albicans. Shows strong hemolytic activity. This chain is Maximins 2/H8 type 2, found in Bombina maxima (Giant fire-bellied toad).